Reading from the N-terminus, the 1188-residue chain is DNA-directed RNA polymerase subunit beta (1188 aa).

Belongs to the RNA polymerase beta chain family. The RNAP catalytic core consists of 2 alpha, 1 beta, 1 beta' and 1 omega subunit. When a sigma factor is associated with the core the holoenzyme is formed, which can initiate transcription.

The enzyme catalyses RNA(n) + a ribonucleoside 5'-triphosphate = RNA(n+1) + diphosphate. DNA-dependent RNA polymerase catalyzes the transcription of DNA into RNA using the four ribonucleoside triphosphates as substrates. The polypeptide is DNA-directed RNA polymerase subunit beta (Streptococcus sanguinis (strain SK36)).